We begin with the raw amino-acid sequence, 457 residues long: Fibrinogen C domain-containing protein 1-A (457 aa).

Positions 1–20 (MGSDRWKNIGGTPQMEDSAQ) are disordered. Residues 1–33 (MGSDRWKNIGGTPQMEDSAQEKTQRKGCGYILC) are Cytoplasmic-facing. Residues 34–54 (TVLLSVAVLLAVTVTGAVLFM) form a helical; Signal-anchor for type II membrane protein membrane-spanning segment. Residues 55–457 (NHYHAPSTEP…MKIRPQREEN (403 aa)) lie on the Extracellular side of the membrane. The disordered stretch occupies residues 216-235 (ADLQRAPSRNSRPRGCANGS). One can recognise a Fibrinogen C-terminal domain in the interval 231 to 454 (CANGSKPRDC…FTEMKIRPQR (224 aa)). Asn-233 is a glycosylation site (N-linked (GlcNAc...) asparagine). Cys-240 and Cys-269 form a disulfide bridge. Asn-336 carries an N-linked (GlcNAc...) asparagine glycan. Ca(2+) contacts are provided by Asp-389 and Asp-391. The cysteines at positions 397 and 410 are disulfide-linked.

As to quaternary structure, homotetramer; disulfide-linked.

Its subcellular location is the membrane. Its function is as follows. Acetyl group-binding receptor which shows a calcium-dependent binding to acetylated structures such as chitin, some N-acetylated carbohydrates, and amino acids. The chain is Fibrinogen C domain-containing protein 1-A (fibcd1-a) from Xenopus laevis (African clawed frog).